Consider the following 139-residue polypeptide: Large ribosomal subunit protein mL42 (139 aa).

The N-terminal 32 residues, M1 to H32, are a transit peptide targeting the mitochondrion.

Belongs to the mitochondrion-specific ribosomal protein mL42 family. Component of the mitochondrial ribosome large subunit (39S) which comprises a 16S rRNA and about 50 distinct proteins. Component of the mitochondrial ribosome small subunit (28S) which comprises a 12S rRNA and about 30 distinct proteins.

It is found in the mitochondrion. This is Large ribosomal subunit protein mL42 (MRPL42) from Pongo abelii (Sumatran orangutan).